The chain runs to 616 residues: DNA-binding protein RFX5 (616 aa).

A disordered region spans residues 1 to 29 (MAEDEPDAKSPKTGGRAPPGGAEAGEPTT). N-acetylalanine is present on alanine 2. Phosphoserine is present on serine 10. Residues 13 to 29 (TGGRAPPGGAEAGEPTT) show a composition bias toward low complexity. Positions 25 to 90 (GEPTTLLQRL…PSTLSNEEYM (66 aa)) are N-terminal domain. Residues 62 to 66 (LYLYL) form a leucine-rich region; critical for dimer formation and for interaction with RFXAP region. The segment at residues 92 to 168 (AYRWIRNHLE…YCYSGIRRKT (77 aa)) is a DNA-binding region (RFX-type winged-helix). A PxLPxI/L motif; mediates interaction with RFXANK motif is present at residues 173–178 (PPLPGL). Serine 185 carries the post-translational modification Phosphoserine. Disordered regions lie at residues 252–314 (AEED…ESSA) and 391–616 (LPGP…ATPP). The span at 276–293 (GAHKKPERLAQPPKDLEA) shows a compositional bias: basic and acidic residues. The segment covering 391 to 401 (LPGPGPGPGRA) has biased composition (pro residues). Basic and acidic residues predominate over residues 424 to 434 (GPHDKGVKRTA). A compositionally biased stretch (basic residues) spans 463–473 (KRKRGRPRKKS). The span at 534 to 546 (QGDGTVSKGGRGP) shows a compositional bias: gly residues. Basic and acidic residues predominate over residues 606–616 (QEHKDPKATPP).

Belongs to the RFX family. Homodimer. The RFX heterotetrameric complex consists of 2 molecules of RFX5 and one each of RFXAP and RFX-B/RFXANK; with each subunit representing a separate complementation group. Interacts (via PxLPxI/L motif) with RFXANK (via ankyrin repeats); the interaction is direct. RFX forms cooperative DNA binding complexes with X2BP and CBF/NF-Y. RFX associates with CIITA to form an active transcriptional complex. Phosphorylated. Ubiquitous.

It localises to the nucleus. In terms of biological role, activates transcription from class II MHC promoters. Recognizes X-boxes. Mediates cooperative binding between RFX and NF-Y. RFX binds the X1 box of MHC-II promoters. This is DNA-binding protein RFX5 (RFX5) from Homo sapiens (Human).